Here is a 240-residue protein sequence, read N- to C-terminus: Lactate utilization protein C (240 aa).

This sequence belongs to the LutC/YkgG family.

Is involved in L-lactate degradation and allows cells to grow with lactate as the sole carbon source. This chain is Lactate utilization protein C, found in Bacillus pumilus (strain SAFR-032).